The sequence spans 235 residues: Proteasome subunit alpha type-2 (235 aa).

Belongs to the peptidase T1A family. In terms of assembly, the 26S proteasome consists of a 20S proteasome core and two 19S regulatory subunits. The 20S proteasome core is composed of 28 subunits that are arranged in four stacked rings, resulting in a barrel-shaped structure. The two end rings are each formed by seven alpha subunits, and the two central rings are each formed by seven beta subunits. The catalytic chamber with the active sites is on the inside of the barrel.

Its subcellular location is the cytoplasm. The protein resides in the nucleus. Its function is as follows. The proteasome is a multicatalytic proteinase complex which is characterized by its ability to cleave peptides with Arg, Phe, Tyr, Leu, and Glu adjacent to the leaving group at neutral or slightly basic pH. The proteasome has an ATP-dependent proteolytic activity. This chain is Proteasome subunit alpha type-2 (PAB1), found in Oryza sativa subsp. indica (Rice).